Reading from the N-terminus, the 229-residue chain is Urease accessory protein UreF (229 aa).

It belongs to the UreF family. UreD, UreF and UreG form a complex that acts as a GTP-hydrolysis-dependent molecular chaperone, activating the urease apoprotein by helping to assemble the nickel containing metallocenter of UreC. The UreE protein probably delivers the nickel.

The protein resides in the cytoplasm. Required for maturation of urease via the functional incorporation of the urease nickel metallocenter. This is Urease accessory protein UreF from Trichormus variabilis (strain ATCC 29413 / PCC 7937) (Anabaena variabilis).